The sequence spans 266 residues: 3-methyl-2-oxobutanoate hydroxymethyltransferase (266 aa).

2 residues coordinate Mg(2+): aspartate 45 and aspartate 84. 3-methyl-2-oxobutanoate contacts are provided by residues 45–46 (DS), aspartate 84, and lysine 112. Position 114 (glutamate 114) interacts with Mg(2+). The Proton acceptor role is filled by glutamate 181.

The protein belongs to the PanB family. As to quaternary structure, homodecamer; pentamer of dimers. Requires Mg(2+) as cofactor.

The protein localises to the cytoplasm. It catalyses the reaction 3-methyl-2-oxobutanoate + (6R)-5,10-methylene-5,6,7,8-tetrahydrofolate + H2O = 2-dehydropantoate + (6S)-5,6,7,8-tetrahydrofolate. The protein operates within cofactor biosynthesis; (R)-pantothenate biosynthesis; (R)-pantoate from 3-methyl-2-oxobutanoate: step 1/2. In terms of biological role, catalyzes the reversible reaction in which hydroxymethyl group from 5,10-methylenetetrahydrofolate is transferred onto alpha-ketoisovalerate to form ketopantoate. This is 3-methyl-2-oxobutanoate hydroxymethyltransferase from Pseudomonas syringae pv. tomato (strain ATCC BAA-871 / DC3000).